Consider the following 233-residue polypeptide: UPF0758 protein SRU_2338 (233 aa).

The MPN domain occupies Gln110–Ile232. Residues His181, His183, and Asp194 each contribute to the Zn(2+) site. Positions His181 to Asp194 match the JAMM motif motif.

The protein belongs to the UPF0758 family.

In Salinibacter ruber (strain DSM 13855 / M31), this protein is UPF0758 protein SRU_2338.